A 206-amino-acid polypeptide reads, in one-letter code: Ribosomal RNA large subunit methyltransferase E (206 aa).

Residues Gly60, Trp62, Asp80, Asp96, and Asp121 each contribute to the S-adenosyl-L-methionine site. Lys161 acts as the Proton acceptor in catalysis.

It belongs to the class I-like SAM-binding methyltransferase superfamily. RNA methyltransferase RlmE family.

It localises to the cytoplasm. It carries out the reaction uridine(2552) in 23S rRNA + S-adenosyl-L-methionine = 2'-O-methyluridine(2552) in 23S rRNA + S-adenosyl-L-homocysteine + H(+). Its function is as follows. Specifically methylates the uridine in position 2552 of 23S rRNA at the 2'-O position of the ribose in the fully assembled 50S ribosomal subunit. This Francisella tularensis subsp. tularensis (strain FSC 198) protein is Ribosomal RNA large subunit methyltransferase E.